A 750-amino-acid chain; its full sequence is MLRAKNQLFLLSPHYLRQVKESSGSRLIQQRLLHQQQPLHPEWAALAKKQLKGKNPEDLIWHTPEGISIKPLYSKRDTMDLPEELPGVKPFTRGPYPTMYTFRPWTIRQYAGFSTVEESNKFYKDNIKAGQQGLSVAFDLATHRGYDSDNPRLRGDVGMAGVAIDTVEDTKILFDGIPLEKMSVSMTMNGAVIPVLATFIVTGEEQGVPKEKLTGTIQNDILKEFMVRNTYIFPPEPSMKIIADIFQYTAKHMPKFNSISISGYHMQEAGADAILELAYTIADGLEYCRTGLQAGLTIDEFAPRLSFFWGIGMNFYMEIAKMRAGRRLWAHLIEKMLQPKNSKSLLLRAHCQTSGWSLTEQDPYNNIIRTTIEAMAAVFGGTQSLHTNSFDEALGLPTVKSARIARNTQIIIQEESGIPKVADPWGGSYMMESLTNDIYDAALKLINEIEEMGGMAKAVAEGIPKLRIEECAARRQARIDSGSEVIVGVNKYQLEKEESVDVLAIDNTSVRNKQIEKLKKVKSSRDQALAERCLDALTACAASGDGNILALAVDATRARCTVGEITYAMKKVFGEHKANDRMVSGAYRQEFGESKEIAFAIKRVEKFMEREGRRPRLLVAKMGQDGHDRGAKVIATGFADLGFDVDIGPLFQTPREVAQQAVDADVHTVGVSTLAAGHKTLVPELIKELNALGRPDILVMCGGVIPPQDYEFLFEVGVSNVFGPGTRIPKAAVQVLDDIEKCLEKKQQSI.

Residues 1–32 constitute a mitochondrion transit peptide; the sequence is MLRAKNQLFLLSPHYLRQVKESSGSRLIQQRL. Gln50 lines the malonyl-CoA pocket. N6-acetyllysine is present on Lys89. Malonyl-CoA is bound by residues 96 to 99 and 106 to 110; these read YPTM and TIRQY. Position 212 is an N6-acetyllysine (Lys212). Residues 216–218, Arg228, Lys255, His265, and 304–306 each bind malonyl-CoA; these read TIQ and RLS. The residue at position 335 (Lys335) is an N6-acetyllysine. Lys343 bears the N6-succinyllysine mark. A Phosphoserine modification is found at Ser481. Lys595 carries the post-translational modification N6-succinyllysine. Lys602 is subject to N6-acetyllysine. One can recognise a B12-binding domain in the interval 614–746; the sequence is RPRLLVAKMG…DDIEKCLEKK (133 aa). Residue His627 coordinates adenosylcob(III)alamin.

It belongs to the methylmalonyl-CoA mutase family. Homodimer. Interacts (the apoenzyme form) with MMAA; the interaction is GTP dependent. It depends on adenosylcob(III)alamin as a cofactor.

Its subcellular location is the mitochondrion matrix. The protein resides in the mitochondrion. The protein localises to the cytoplasm. It carries out the reaction (R)-methylmalonyl-CoA = succinyl-CoA. Inhibited by itaconyl-CoA, a metabolite that inactivates the coenzyme B12 cofactor. Functionally, catalyzes the reversible isomerization of methylmalonyl-CoA (MMCoA) (generated from branched-chain amino acid metabolism and degradation of dietary odd chain fatty acids and cholesterol) to succinyl-CoA (3-carboxypropionyl-CoA), a key intermediate of the tricarboxylic acid cycle. This is Methylmalonyl-CoA mutase, mitochondrial (MMUT) from Bos taurus (Bovine).